Reading from the N-terminus, the 380-residue chain is Protein Wnt-5a (380 aa).

Positions 1-37 (MKKPIGILSPGVALGTAGGAMSSKFFLMALATFFSFA) are cleaved as a signal peptide. A propeptide spanning residues 38–61 (QVVIEANSWWSLGMNNPVQMSEVY) is cleaved from the precursor. Cysteines 104 and 115 form a disulfide. N-linked (GlcNAc...) asparagine glycosylation is found at Asn114 and Asn120. Disulfide bonds link Cys154–Cys162, Cys164–Cys182, Cys238–Cys252, Cys240–Cys247, Cys309–Cys340, Cys325–Cys335, Cys339–Cys379, Cys355–Cys370, Cys357–Cys367, and Cys362–Cys363. Ser244 carries the O-palmitoleoyl serine; by PORCN lipid modification. Residues Asn312 and Asn326 are each glycosylated (N-linked (GlcNAc...) asparagine).

It belongs to the Wnt family. Forms a soluble 1:1 complex with AFM; this prevents oligomerization and is required for prolonged biological activity. The complex with AFM may represent the physiological form in body fluids. Homooligomer; disulfide-linked, leading to inactivation. Interacts with PORCN. Interacts with WLS. Interacts with glypican GCP3. Interacts with PKD1 (via extracellular domain). Interacts with TMEM67. Post-translationally, glycosylation is necessary for secretion but not for activity. Palmitoleoylation is required for efficient binding to frizzled receptors. Depalmitoleoylation leads to Wnt signaling pathway inhibition. In terms of processing, proteolytic processing by TIKI1 and TIKI2 promotes oxidation and formation of large disulfide-bond oligomers, leading to inactivation of WNT5A. Expressed in a gradient at the caudal end of the embryo during gastrulation and later in the distal-most aspect of several structures that extend from the body such as the limbs and genital tubercle.

The protein resides in the secreted. It localises to the extracellular space. The protein localises to the extracellular matrix. In terms of biological role, ligand for members of the frizzled family of seven transmembrane receptors. Can activate or inhibit canonical Wnt signaling, depending on receptor context. In the presence of FZD4, activates beta-catenin signaling. In the presence of ROR2, inhibits the canonical Wnt pathway by promoting beta-catenin degradation through a GSK3-independent pathway which involves down-regulation of beta-catenin-induced reporter gene expression. Suppression of the canonical pathway allows chondrogenesis to occur and inhibits tumor formation. Stimulates cell migration. Decreases proliferation, migration, invasiveness and clonogenicity of carcinoma cells and may act as a tumor suppressor. Mediates motility of melanoma cells. Required during embryogenesis for extension of the primary anterior-posterior axis and for outgrowth of limbs and the genital tubercle. Inhibits type II collagen expression in chondrocytes. This Mus musculus (Mouse) protein is Protein Wnt-5a (Wnt5a).